The chain runs to 236 residues: Demethylmenaquinone methyltransferase (236 aa).

Residues Thr58, Asp79, and 106 to 107 each bind S-adenosyl-L-methionine; that span reads NA.

This sequence belongs to the class I-like SAM-binding methyltransferase superfamily. MenG/UbiE family.

The catalysed reaction is a 2-demethylmenaquinol + S-adenosyl-L-methionine = a menaquinol + S-adenosyl-L-homocysteine + H(+). It functions in the pathway quinol/quinone metabolism; menaquinone biosynthesis; menaquinol from 1,4-dihydroxy-2-naphthoate: step 2/2. In terms of biological role, methyltransferase required for the conversion of demethylmenaquinol (DMKH2) to menaquinol (MKH2). The polypeptide is Demethylmenaquinone methyltransferase (Alkalihalophilus pseudofirmus (strain ATCC BAA-2126 / JCM 17055 / OF4) (Bacillus pseudofirmus)).